The primary structure comprises 222 residues: Ribonuclease T (222 aa).

An Exonuclease domain is found at 20 to 194; that stretch reads VVIDVETAGF…YDTERTAELF (175 aa). Mg(2+) contacts are provided by aspartate 23, glutamate 25, histidine 181, and aspartate 186. Histidine 181 (proton donor/acceptor) is an active-site residue.

This sequence belongs to the RNase T family. As to quaternary structure, homodimer. It depends on Mg(2+) as a cofactor.

Functionally, trims short 3' overhangs of a variety of RNA species, leaving a one or two nucleotide 3' overhang. Responsible for the end-turnover of tRNA: specifically removes the terminal AMP residue from uncharged tRNA (tRNA-C-C-A). Also appears to be involved in tRNA biosynthesis. The polypeptide is Ribonuclease T (Shewanella sp. (strain ANA-3)).